The primary structure comprises 207 residues: 23 kDa calcium-binding protein (207 aa).

Methionine 1 bears the Blocked amino end (Met) mark. EF-hand domains lie at alanine 17–asparagine 52, valine 60–lysine 95, methionine 119–glutamine 154, and proline 161–lysine 196. Ca(2+)-binding residues include aspartate 30, asparagine 32, asparagine 34, threonine 36, glutamate 41, aspartate 73, aspartate 75, asparagine 77, glutamate 84, aspartate 132, aspartate 134, serine 136, glutamine 138, glutamate 143, aspartate 174, aspartate 176, asparagine 178, threonine 180, and glutamate 185.

Its function is as follows. Expected to play a crucial role in calcium-dependent regulation of ciliary movement. This chain is 23 kDa calcium-binding protein, found in Tetrahymena thermophila.